The chain runs to 305 residues: Tyrosine recombinase XerC (305 aa).

Residues 1–94 (MSSVDEFLTY…ACRSYYAWLL (94 aa)) enclose the Core-binding (CB) domain. The Tyr recombinase domain maps to 115 to 292 (KLPQVLDADE…DFQHLAKVYD (178 aa)). Catalysis depends on residues arginine 154, lysine 178, histidine 244, arginine 247, and histidine 270. Tyrosine 279 (O-(3'-phospho-DNA)-tyrosine intermediate) is an active-site residue.

Belongs to the 'phage' integrase family. XerC subfamily. In terms of assembly, forms a cyclic heterotetrameric complex composed of two molecules of XerC and two molecules of XerD.

The protein localises to the cytoplasm. Its function is as follows. Site-specific tyrosine recombinase, which acts by catalyzing the cutting and rejoining of the recombining DNA molecules. The XerC-XerD complex is essential to convert dimers of the bacterial chromosome into monomers to permit their segregation at cell division. It also contributes to the segregational stability of plasmids. This Xanthomonas axonopodis pv. citri (strain 306) protein is Tyrosine recombinase XerC.